The following is a 296-amino-acid chain: Glycine--tRNA ligase alpha subunit (296 aa).

The protein belongs to the class-II aminoacyl-tRNA synthetase family. Tetramer of two alpha and two beta subunits.

It is found in the cytoplasm. It carries out the reaction tRNA(Gly) + glycine + ATP = glycyl-tRNA(Gly) + AMP + diphosphate. The protein is Glycine--tRNA ligase alpha subunit of Desulfitobacterium hafniense (strain DSM 10664 / DCB-2).